Consider the following 265-residue polypeptide: Shikimate dehydrogenase (NADP(+)) (265 aa).

Residues 15–17 (SLS) and threonine 62 contribute to the shikimate site. Residue lysine 66 is the Proton acceptor of the active site. The shikimate site is built by asparagine 87 and aspartate 102. Residues 125-129 (GAGGA), 149-154 (NRTLEK), and leucine 209 contribute to the NADP(+) site. Tyrosine 211 contacts shikimate. An NADP(+)-binding site is contributed by glycine 233.

The protein belongs to the shikimate dehydrogenase family. Homodimer.

It carries out the reaction shikimate + NADP(+) = 3-dehydroshikimate + NADPH + H(+). The protein operates within metabolic intermediate biosynthesis; chorismate biosynthesis; chorismate from D-erythrose 4-phosphate and phosphoenolpyruvate: step 4/7. Involved in the biosynthesis of the chorismate, which leads to the biosynthesis of aromatic amino acids. Catalyzes the reversible NADPH linked reduction of 3-dehydroshikimate (DHSA) to yield shikimate (SA). The polypeptide is Shikimate dehydrogenase (NADP(+)) (Legionella pneumophila (strain Corby)).